Reading from the N-terminus, the 496-residue chain is Catalase-A (496 aa).

Catalysis depends on residues His-54 and Asn-128. A heme-binding site is contributed by Tyr-338. Residues Ser-494 to Leu-496 carry the Microbody targeting signal motif.

It belongs to the catalase family. Heme serves as cofactor.

The protein localises to the peroxisome matrix. The enzyme catalyses 2 H2O2 = O2 + 2 H2O. In terms of biological role, catalyzes the degradation of hydrogen peroxide (H(2)O(2)) generated by peroxisomal oxidases to water and oxygen, thereby protecting cells from the toxic effects of hydrogen peroxide. The protein is Catalase-A (catA) of Dictyostelium discoideum (Social amoeba).